The sequence spans 579 residues: Golvesin (579 aa).

The interval 1 to 75 is required for targeting to the plasma membrane; it reads MTSVNEHSLL…NNNNNNNNNN (75 aa). The interval 1–79 is disordered; sequence MTSVNEHSLL…NNNNNNSNTG (79 aa). The Lumenal segment spans residues 1 to 94; that stretch reads MTSVNEHSLL…KKKKWNFRKK (94 aa). Residues 11 to 77 show a composition bias toward low complexity; the sequence is INNNENNDNN…NNNNNNNNSN (67 aa). A helical; Signal-anchor for type III membrane protein transmembrane segment spans residues 95-115; the sequence is ILPMIVILIITAIVVCLVVFS. The interval 95 to 118 is required for membrane targeting; that stretch reads ILPMIVILIITAIVVCLVVFSLPF. Residues 116–578 are Cytoplasmic-facing; it reads LPFDSSNTIY…SNDFVIAESP (463 aa). Residues 559–579 form a required for transfer to endosomes and contractile vacuoles; the protein is trapped in the Golgi region; that stretch reads WPSSKGIPGFSNDFVIAESPE.

The protein resides in the contractile vacuole membrane. The protein localises to the endosome membrane. It localises to the golgi apparatus membrane. In Dictyostelium discoideum (Social amoeba), this protein is Golvesin (gol).